A 290-amino-acid chain; its full sequence is Enoyl-CoA hydratase, mitochondrial (290 aa).

The transit peptide at 1 to 27 directs the protein to the mitochondrion; that stretch reads MAALRALLPRACSSLLSSVRCPELRRF. Position 98 to 101 (98 to 101) interacts with substrate; sequence ADIK. Lys101 is subject to N6-acetyllysine; alternate. Lys101 bears the N6-succinyllysine; alternate mark. At Ser114 the chain carries Phosphoserine. N6-acetyllysine; alternate is present on Lys115. Lys115 bears the N6-succinyllysine; alternate mark. Gly141 contributes to the substrate binding site. Lys204 is subject to N6-succinyllysine. Residue Lys211 is modified to N6-acetyllysine. Lys217 is subject to N6-acetyllysine; alternate. At Lys217 the chain carries N6-succinyllysine; alternate.

This sequence belongs to the enoyl-CoA hydratase/isomerase family. Homohexamer; dimer of trimers. Post-translationally, acetylation of Lys-101 is observed in liver mitochondria from fasted mice but not from fed mice.

The protein resides in the mitochondrion matrix. It catalyses the reaction a (3S)-3-hydroxyacyl-CoA = a (2E)-enoyl-CoA + H2O. The catalysed reaction is a (3E)-enoyl-CoA = a 4-saturated (2E)-enoyl-CoA. It carries out the reaction (3E)-hexenoyl-CoA = (2E)-hexenoyl-CoA. The enzyme catalyses (3S)-3-hydroxybutanoyl-CoA = (2E)-butenoyl-CoA + H2O. It catalyses the reaction 3-hydroxyisovaleryl-CoA = 3-methylbut-2-enoyl-CoA + H2O. The catalysed reaction is 3-hydroxypropanoyl-CoA = acryloyl-CoA + H2O. It carries out the reaction 3-hydroxybutanoyl-CoA = (2E)-butenoyl-CoA + H2O. The enzyme catalyses 2-methylpropenoyl-CoA + H2O = (S)-3-hydroxyisobutanoyl-CoA. It catalyses the reaction (3S)-hydroxyhexanoyl-CoA = (2E)-hexenoyl-CoA + H2O. The catalysed reaction is (3S)-hydroxydecanoyl-CoA = (2E)-decenoyl-CoA + H2O. It participates in lipid metabolism; fatty acid beta-oxidation. Its function is as follows. Converts unsaturated trans-2-enoyl-CoA species ((2E)-enoyl-CoA) to the corresponding (3S)-3-hydroxyacyl-CoA species through addition of a water molecule to the double bond. Catalyzes the hydration of medium- and short-chained fatty enoyl-CoA thioesters from 4 carbons long (C4) up to C16. Has high substrate specificity for crotonyl-CoA ((2E)-butenoyl-CoA) and moderate specificity for acryloyl-CoA, 3-methylcrotonyl-CoA (3-methyl-(2E)-butenoyl-CoA) and methacrylyl-CoA ((2E)-2-methylpropenoyl-CoA). Can bind tiglyl-CoA (2-methylcrotonoyl-CoA), but hydrates only a small amount of this substrate. Plays a key role in the beta-oxidation spiral of short- and medium-chain fatty acid oxidation. At a lower rate than the hydratase reaction, catalyzes the isomerase reaction of trans-3-enoyl-CoA species (such as (3E)-hexenoyl-CoA) to trans-2-enoyl-CoA species (such as (2E)-hexenoyl-CoA), which are subsequently hydrated to 3(S)-3-hydroxyacyl-CoA species (such as (3S)-hydroxyhexanoyl-CoA). This chain is Enoyl-CoA hydratase, mitochondrial, found in Mus musculus (Mouse).